The sequence spans 1592 residues: Serine/threonine-protein kinase mrck-1 (1592 aa).

The interval 1–954 (MAEPPPDDSA…IFSPVSISAM (954 aa)) is involved in homo-dimerization. The Protein kinase domain occupies 83-351 (FEVLKVIGKG…LSDFQLHPFF (269 aa)). ATP is bound by residues 89-97 (IGKGAFGEV) and Lys-112. Asp-207 serves as the catalytic Proton acceptor. Residues 352–426 (EGIDWNTIRD…THGSLLSDAR (75 aa)) form the AGC-kinase C-terminal domain. Ser-415 carries the post-translational modification Phosphoserine. Residue Tyr-416 is modified to Phosphotyrosine. Coiled-coil stretches lie at residues 444 to 782 (ELME…KNNS) and 811 to 871 (LDLQ…IENS). Residues 782 to 796 (SPLTTSNYIQNTPSG) show a composition bias toward polar residues. The disordered stretch occupies residues 782 to 801 (SPLTTSNYIQNTPSGWGSRR). The interval 955–1534 (ERGHNFERMK…FRTIGKDDRS (580 aa)) is involved in binding to membranes, with a preference for di-phosphorylated phosphoinositides (PIPs). A Phorbol-ester/DAG-type zinc finger spans residues 957-1007 (GHNFERMKIKTPTKCGHCTSILIGLDRQGLFCQSCQYACHVSCAERVSQSC). Zn(2+) is bound by residues His-958, Cys-971, Cys-974, Cys-988, Cys-991, His-996, Cys-999, and Cys-1007. One can recognise a PH domain in the interval 1026–1154 (GTAYEGLVKT…WVVALSELKT (129 aa)). Residues 1181–1479 (IRVAQCCAII…KPLSGDGILS (299 aa)) enclose the CNH domain. A CRIB domain is found at 1544-1557 (ISTPSDFMHIVHMG). The involved in interaction with cdc-42 (GTP-bound). Deletion prevents rescue of a null mutant; furthermore deleted form of mrck-1 is no longer recruited to the cell cortex and instead appears to be completely cytoplasmic stretch occupies residues 1544 to 1557 (ISTPSDFMHIVHMG).

This sequence belongs to the protein kinase superfamily. AGC Ser/Thr protein kinase family. DMPK subfamily. In terms of assembly, homodimer, via N-terminal domains. Interacts (via the CRIB domain) with cdc-42 (GTP-bound), but with a lower affinity for cdc-42 bound to GDP; the interaction is direct and may play a role in the recruitment of mrck-1 to the apical membrane. Requires Mg(2+) as cofactor. As to expression, expressed in embryonic and L4 larval seam cells and in embryonic dorsal and ventral epidermal cells. Also expressed in the pharynx throughout development and in sublateral nerve cords in the L4 larva.

Its subcellular location is the cytoplasm. It localises to the cell cortex. The enzyme catalyses L-seryl-[protein] + ATP = O-phospho-L-seryl-[protein] + ADP + H(+). It catalyses the reaction L-threonyl-[protein] + ATP = O-phospho-L-threonyl-[protein] + ADP + H(+). Its function is as follows. Serine/threonine-protein kinase. Involved in regulating endoderm precursor cell movements during early gastrulation; activates apical myosin and thereby increases actomyosin contractility and tension in the apical cell cortex, probably as a result of recruitment of mrck-1 to the cortex by a combination of interaction with active cdc-42 and membrane binding. May phosphorylate and inactivate the phosphatase mel-11, and thereby contribute to the regulation of myosin II contractility during embryonic elongation. Involved in controlling canal length and Golgi/ER integrity during excretory canal elongation. In Caenorhabditis elegans, this protein is Serine/threonine-protein kinase mrck-1.